Here is a 296-residue protein sequence, read N- to C-terminus: QLTTNFYSTSCPNLLSTVKSGVKSAVSSQPRMGASILRLFFHDCFVNGCDGSILLDDTSSFTGEQNAGPNRNSARGFTVINDIKSAVEKACPGVVSCADILAIAARDSVVQLGGPNWNVKVGRRDAKTASQAAANSNIPAPSMSLSQLISSFSAVGLSTRDMVALSGAHTIGQSRCVNFRARVYNETNINAAFATLRQRSCPRAAGSGDANLAPLDINSATSFDNSYFKNLMAQRGLLHSDQVLFNGGSTDSIVRGYSNSPSSFNSDFAAAMIKMGDISPLTGSSGEIRKVCGKTN.

Pyrrolidone carboxylic acid is present on glutamine 1. 4 disulfide bridges follow: cysteine 11-cysteine 91, cysteine 44-cysteine 49, cysteine 97-cysteine 292, and cysteine 176-cysteine 201. The active-site Proton acceptor is histidine 42. Residues aspartate 43, valine 46, glycine 48, aspartate 50, and serine 52 each coordinate Ca(2+). A substrate-binding site is contributed by proline 139. Histidine 169 lines the heme b pocket. A Ca(2+)-binding site is contributed by threonine 170. The N-linked (GlcNAc...) asparagine glycan is linked to asparagine 185. Residues aspartate 216, serine 219, and aspartate 224 each contribute to the Ca(2+) site.

It belongs to the peroxidase family. Classical plant (class III) peroxidase subfamily. Ca(2+) is required as a cofactor. It depends on heme b as a cofactor.

It carries out the reaction 2 a phenolic donor + H2O2 = 2 a phenolic radical donor + 2 H2O. Removal of H(2)O(2), oxidation of toxic reductants, biosynthesis and degradation of lignin, suberization, auxin catabolism, response to environmental stresses such as wounding, pathogen attack and oxidative stress. These functions might be dependent on each isozyme/isoform in each plant tissue. The sequence is that of Peroxidase P7 from Brassica rapa subsp. rapa (Turnip).